A 498-amino-acid chain; its full sequence is NADH-quinone oxidoreductase subunit N 2 (498 aa).

The next 14 membrane-spanning stretches (helical) occupy residues 19–39, 47–67, 83–103, 114–134, 136–156, 171–191, 215–235, 249–269, 282–302, 317–337, 345–365, 389–409, 420–440, and 468–488; these read VATQLSIIFGWASVLLVIALF, IVGYLAMVGAMVAAAVGIPLW, YSLTLNWLFLAAAAITMVLSL, SEYYVLVLFATGGMMLLAQGA, LIILFLGLELLSIVLYVLTGF, LLIGAFAGGFVVFGIALLYGA, IYLLAGAALVVVGFGYKVAMA, PTPIAGLLSVGSKAAGFAALL, IWAPVLAVLAIATLAVGNIGA, IGHAGYILFGVIAAGAPGGIA, VLLYLIAYTFTNLGAFGVLIA, LAVAMAVCMLSLAGVPPTGGF, WLSGMGWITVIGVIVAAIAAF, and AGLALATLGVLILGFLPTPAI.

The protein belongs to the complex I subunit 2 family. NDH-1 is composed of 14 different subunits. Subunits NuoA, H, J, K, L, M, N constitute the membrane sector of the complex.

The protein resides in the cell membrane. It catalyses the reaction a quinone + NADH + 5 H(+)(in) = a quinol + NAD(+) + 4 H(+)(out). NDH-1 shuttles electrons from NADH, via FMN and iron-sulfur (Fe-S) centers, to quinones in the respiratory chain. The immediate electron acceptor for the enzyme in this species is believed to be ubiquinone. Couples the redox reaction to proton translocation (for every two electrons transferred, four hydrogen ions are translocated across the cytoplasmic membrane), and thus conserves the redox energy in a proton gradient. This Roseiflexus castenholzii (strain DSM 13941 / HLO8) protein is NADH-quinone oxidoreductase subunit N 2.